We begin with the raw amino-acid sequence, 254 residues long: Ribosomal protein L11 methyltransferase (254 aa).

Thr-107, Gly-128, Asp-149, Ser-175, and Asn-191 together coordinate S-adenosyl-L-methionine.

The protein belongs to the methyltransferase superfamily. PrmA family.

Its subcellular location is the cytoplasm. It carries out the reaction L-lysyl-[protein] + 3 S-adenosyl-L-methionine = N(6),N(6),N(6)-trimethyl-L-lysyl-[protein] + 3 S-adenosyl-L-homocysteine + 3 H(+). The catalysed reaction is an N-terminal L-alpha-aminoacyl-[protein] + 3 S-adenosyl-L-methionine = an N-terminal trimethyl-L-alpha-aminoacyl-[protein] + 3 S-adenosyl-L-homocysteine + 3 H(+). Its function is as follows. Methylates ribosomal protein L11. Preferentially recognizes free L11 before its incorporation into 50S subunits. This function is dispensable for growth and thermostability. The sequence is that of Ribosomal protein L11 methyltransferase from Thermus thermophilus (strain ATCC 27634 / DSM 579 / HB8).